Reading from the N-terminus, the 439-residue chain is Sex-determination protein fem-3 (439 aa).

Positions 21–45 (RRLKRKANDDDDDDETVRERVDDAE) are disordered.

Component of a complex containing fem-1, fem-2 and fem-3. Interacts with fem-1 and fem-2 (via N-terminus). Part of a E3 ubiquitin-protein ligase complex, at least composed of cul-2, elc-1, tra-1, fem-1, fem-2 and fem-3; mediates the ubiquitination and subsequent proteasomal degradation of tra-1. Interacts with tra-1. Interacts with sel-10. Interacts with tra-2.

In terms of biological role, required for male development. In XO (male) animals, fem-3 directs male differentiation in all tissues. In XX (hermaphrodite) animals, it specifies the first 80 or so germ cells to be sperm. Negatively regulates male development when bound to tra-2. Together with fem-2 associates with the CBC(fem-1) E3 ubiquitin-protein ligase complex which mediates the ubiquitination and subsequent proteasomal degradation of tra-1. This is Sex-determination protein fem-3 from Caenorhabditis remanei (Caenorhabditis vulgaris).